We begin with the raw amino-acid sequence, 498 residues long: MDATTGAVLYQKLQLWEPGMESEEEEEEEEIAEPLVLSLRRLQNTPGNKVGGLPGAWTRLLAGLLLLAVSSSLALRQLQGRNSPKGNLGPVDLPASRHSHHPGVYHHSAVISPAATCSRLGQELLVAGGNVVDAGVGAALCLAVVHPHATGLGATFWGLFYNSSSGNSTALTAGPAQILAPGLGLPTALPALHLLHTHFGRLPWSHLLAKPAMLAQKGFEVDAPLASALAAQGTEGLCPLFCHTNGTPLGLGAQVTNPNLAAVLLREALASSPDLVGNALLNLLVRDLGLELPSVQPKPSLEPALQLLLPQGVLFTTPGPSAGPELMGLLESTLHSKTPSPASCSSLLQTAETPVSSALATVDSHGSMLLLTSSLNSSFGSGHLSPSTGVLLSNLEASSVPSTWACPLILRGNLDDTEDDMLGLVASGIPRGAKAMACTLFNHLTTPQTQQQVQHQAQQRPTESPGICGKEALLQVVVHAEHAQVSSIPSGCCPFQGY.

Residues 1–49 (MDATTGAVLYQKLQLWEPGMESEEEEEEEEIAEPLVLSLRRLQNTPGNK) are Cytoplasmic-facing. A helical; Signal-anchor for type II membrane protein transmembrane segment spans residues 50 to 70 (VGGLPGAWTRLLAGLLLLAVS). Over 71–498 (SSLALRQLQG…PSGCCPFQGY (428 aa)) the chain is Extracellular. Asn162, Asn167, and Asn376 each carry an N-linked (GlcNAc...) asparagine glycan.

Belongs to the gamma-glutamyltransferase family. Heterodimer composed of the light and heavy chains. The active site is located in the light chain. In terms of processing, cleaved by autocatalysis into a large and a small subunit and the autocatalytic cleavage is essential to the functional activation of the enzyme.

Its subcellular location is the membrane. The enzyme catalyses an N-terminal (5-L-glutamyl)-[peptide] + an alpha-amino acid = 5-L-glutamyl amino acid + an N-terminal L-alpha-aminoacyl-[peptide]. It catalyses the reaction glutathione + H2O = L-cysteinylglycine + L-glutamate. The catalysed reaction is an S-substituted glutathione + H2O = an S-substituted L-cysteinylglycine + L-glutamate. It functions in the pathway sulfur metabolism; glutathione metabolism. In terms of biological role, hydrolyzes and transfers gamma-glutamyl moieties from glutathione and other gamma-glutamyl compounds to acceptors. In Rattus norvegicus (Rat), this protein is Glutathione hydrolase 6.